We begin with the raw amino-acid sequence, 310 residues long: Olfactory receptor 8B12 (310 aa).

The Extracellular portion of the chain corresponds to 1–24; that stretch reads MAAKNSSVTEFILEGLTHQPGLRI. N5 carries N-linked (GlcNAc...) asparagine glycosylation. A helical membrane pass occupies residues 25–45; sequence PLFFLFLGFYTVTVVGNLGLI. Topologically, residues 46-53 are cytoplasmic; sequence TLIGLNSH. A helical transmembrane segment spans residues 54–74; that stretch reads LHTPMYFFLFNLSLIDFCFST. Topologically, residues 75-98 are extracellular; the sequence is TITPKMLMSFVSRKNIISFTGCMT. C96 and C188 are joined by a disulfide. Residues 99–119 form a helical membrane-spanning segment; the sequence is QLFFFCFFVVSESFILSAMAY. Residues 120–138 lie on the Cytoplasmic side of the membrane; that stretch reads DRYVAICNPLLYTVTMSCQ. A helical membrane pass occupies residues 139-159; the sequence is VCLLLLLGAYGMGFAGAMAHT. Residues 160 to 196 are Extracellular-facing; sequence GSIMNLTFCADNLVNHFMCDILPLLELSCNSSYMNEL. N-linked (GlcNAc...) asparagine glycans are attached at residues N164 and N189. A helical membrane pass occupies residues 197–216; that stretch reads VVFIVVAVDVGMPIVTVFIS. Residues 217 to 236 are Cytoplasmic-facing; the sequence is YALILSSILHNSSTEGRSKA. The chain crosses the membrane as a helical span at residues 237-257; sequence FSTCSSHIIVVSLFFGSGAFM. Residues 258 to 270 lie on the Extracellular side of the membrane; sequence YLKPLSILPLEQG. Residues 271–291 traverse the membrane as a helical segment; sequence KVSSLFYTIIVPVLNPLIYSL. Topologically, residues 292–310 are cytoplasmic; the sequence is RNKDVKVALRRTLGRKIFS.

This sequence belongs to the G-protein coupled receptor 1 family.

The protein localises to the cell membrane. In terms of biological role, odorant receptor. This chain is Olfactory receptor 8B12 (OR8B12), found in Homo sapiens (Human).